A 466-amino-acid polypeptide reads, in one-letter code: Bifunctional NAD(P)H-hydrate repair enzyme Nnr (466 aa).

The interval 1–207 (MLSVYEKVNA…HLGVFNQIYE (207 aa)) is NAD(P)H-hydrate epimerase. The YjeF N-terminal domain maps to 8–207 (VNALDKRAIE…HLGVFNQIYE (200 aa)). Residues 56-60 (DNGGD) form an NADPHX 1; for epimerase activity region. Residues asparagine 57 and aspartate 120 each coordinate K(+). The segment at 124–130 (GSHFKGK) is NADPHX 1; for epimerase activity. (6S)-NADPHX is bound at residue aspartate 151. Serine 154 contributes to the K(+) binding site. The region spanning 215 to 466 (LEKSDLKLPL…LDLIEKIKQL (252 aa)) is the YjeF C-terminal domain. The tract at residues 215 to 466 (LEKSDLKLPL…LDLIEKIKQL (252 aa)) is ADP-dependent (S)-NAD(P)H-hydrate dehydratase. (6S)-NADPHX is bound at residue glycine 300. Positions 342 to 348 (HPKEFLS) are NADPHX 2; for dehydratase activity. ADP contacts are provided by residues 385–389 (KGANT) and 404–413 (SVALAKAGSG). Aspartate 414 serves as a coordination point for (6S)-NADPHX.

This sequence in the N-terminal section; belongs to the NnrE/AIBP family. The protein in the C-terminal section; belongs to the NnrD/CARKD family. It depends on K(+) as a cofactor.

It carries out the reaction (6S)-NADHX + ADP = AMP + phosphate + NADH + H(+). The catalysed reaction is (6S)-NADPHX + ADP = AMP + phosphate + NADPH + H(+). The enzyme catalyses (6R)-NADHX = (6S)-NADHX. It catalyses the reaction (6R)-NADPHX = (6S)-NADPHX. Its function is as follows. Bifunctional enzyme that catalyzes the epimerization of the S- and R-forms of NAD(P)HX and the dehydration of the S-form of NAD(P)HX at the expense of ADP, which is converted to AMP. This allows the repair of both epimers of NAD(P)HX, a damaged form of NAD(P)H that is a result of enzymatic or heat-dependent hydration. The polypeptide is Bifunctional NAD(P)H-hydrate repair enzyme Nnr (nnr) (Helicobacter pylori (strain ATCC 700392 / 26695) (Campylobacter pylori)).